Reading from the N-terminus, the 548-residue chain is Probable malate:quinone oxidoreductase (548 aa).

Residues 521–548 (DKPQAADSTPKPQLKPQPVQKEVADIAL) are disordered. Residues 530–541 (PKPQLKPQPVQK) are compositionally biased toward low complexity.

It belongs to the MQO family. It depends on FAD as a cofactor.

The catalysed reaction is (S)-malate + a quinone = a quinol + oxaloacetate. The protein operates within carbohydrate metabolism; tricarboxylic acid cycle; oxaloacetate from (S)-malate (quinone route): step 1/1. This is Probable malate:quinone oxidoreductase from Shigella boydii serotype 4 (strain Sb227).